A 1914-amino-acid chain; its full sequence is Myosin light chain kinase, smooth muscle (1914 aa).

Residue Gly-2 is modified to N-acetylalanine. Ig-like C2-type domains follow at residues 33–122 (PAFI…VELT) and 161–249 (PKFA…AELS). A disulfide bond links Cys-182 and Cys-233. Tyr-231 carries the post-translational modification Phosphotyrosine; by ABL1. The disordered stretch occupies residues 286-393 (DSLEAAAKSK…TRQPGLGSQD (108 aa)). A Phosphoserine modification is found at Ser-305. A compositionally biased stretch (basic and acidic residues) spans 318-329 (RESKLESCKDSP). Over residues 331–347 (TAPQTPVLQKTSSSITL) the composition is skewed to polar residues. 2 positions are modified to phosphoserine: Ser-343 and Ser-365. Ig-like C2-type domains lie at 414 to 503 (PKFE…WTLQ) and 514 to 599 (PSFS…AWVT). Disulfide bonds link Cys-435/Cys-487 and Cys-535/Cys-583. The residue at position 464 (Tyr-464) is a Phosphotyrosine; by ABL1 and SRC. Position 471 is a phosphotyrosine; by SRC (Tyr-471). Tyr-556 carries the phosphotyrosine; by ABL1 modification. N6-acetyllysine is present on Lys-608. Tyr-611 is modified (phosphotyrosine; by ABL1). Ig-like C2-type domains follow at residues 620 to 711 (PTAP…AVLT) and 721 to 821 (PWFI…ALPR). Cys-742 and Cys-805 are oxidised to a cystine. Tyr-792 and Tyr-846 each carry phosphotyrosine; by ABL1. 4 tandem repeats follow at residues 868–895 (DVRGVLKRRVETRQHTEEAIRQQEVEQL), 896–923 (DFRDLLGKKVSTKTLSEDDLKEIPAEQM), 924–951 (DFRANLQRQVKPKTVSEEERKVHSPQQV), and 952–979 (DFRSVLAKKGTSKTPVPEKVPPPKPATP). The segment at 868-998 (DVRGVLKRRV…KKLPAENGSS (131 aa)) is 5 X 28 AA approximate tandem repeats. The interval 923 to 963 (MDFRANLQRQVKPKTVSEEERKVHSPQQVDFRSVLAKKGTS) is actin-binding (calcium/calmodulin-sensitive). Residues 932-1098 (QVKPKTVSEE…KRSESQGTAP (167 aa)) form a disordered region. A Phosphoserine modification is found at Ser-947. Residues 948-963 (PQQVDFRSVLAKKGTS) are calmodulin-binding. The 1-5; truncated repeat unit spans residues 980–998 (DFRSVLGGKKKLPAENGSS). One copy of the 2-1; truncated repeat lies at 999–1003 (SAETL). The interval 999–1063 (SAETLNAKAV…KPDENLKSAS (65 aa)) is 6 X 12 AA approximate tandem repeats. A run of 5 repeats spans residues 1004 to 1015 (NAKAVESSKPLS), 1016 to 1027 (NAQPSGPLKPVG), 1028 to 1039 (NAKPAETLKPMG), 1040 to 1051 (NAKPAETLKPMG), and 1052 to 1063 (NAKPDENLKSAS). Residues 1054-1077 (KPDENLKSASKEELKKDVKNDVNC) show a composition bias toward basic and acidic residues. Positions 1061–1460 (SASKEELKKD…TVTINTEQKV (400 aa)) are actin-binding (calcium/calmodulin-insensitive). The 89-residue stretch at 1098 to 1186 (PAFKQKLQDV…GQAECSCQVT (89 aa)) folds into the Ig-like C2-type 7 domain. A disulfide bridge links Cys-1119 with Cys-1170. The segment at 1192–1237 (ASENTKAPEMKSRRPKSSLPPVLGTESDATVKKKPAPKTPPKAAMP) is disordered. An Ig-like C2-type 8 domain is found at 1238 to 1326 (PQIIQFPEDQ…GSRQAQVNLT (89 aa)). A Fibronectin type-III domain is found at 1334 to 1426 (PAGTPCASDI…QESELTTVGE (93 aa)). Polar residues predominate over residues 1413 to 1422 (SEPSQESELT). Residues 1413–1446 (SEPSQESELTTVGEKPEEPKDEVEVSDDDEKEPE) form a disordered region. The span at 1431-1445 (PKDEVEVSDDDEKEP) shows a compositional bias: acidic residues. Ser-1438 carries the post-translational modification Phosphoserine. The residue at position 1449 (Tyr-1449) is a Phosphotyrosine; by ABL1. Residues 1464–1719 (YDIEERLGSG…CTQCLQHPWL (256 aa)) enclose the Protein kinase domain. ATP is bound by residues 1470–1478 (LGSGKFGQV) and Lys-1493. A Phosphotyrosine; by ABL1 modification is found at Tyr-1575. Asp-1585 serves as the catalytic Proton acceptor. Tyr-1635 is subject to Phosphotyrosine; by ABL1. Residues 1711-1774 (TQCLQHPWLM…SGLSGRKSST (64 aa)) form a calmodulin-binding region. Phosphoserine is present on residues Ser-1759, Ser-1760, Ser-1772, Ser-1773, and Ser-1776. The segment at 1767–1787 (LSGRKSSTGSPTSPLNAEKLE) is disordered. Polar residues predominate over residues 1770-1781 (RKSSTGSPTSPL). Thr-1778 is modified (phosphothreonine). The residue at position 1779 (Ser-1779) is a Phosphoserine. An Ig-like C2-type 9 domain is found at 1809–1898 (PYFSKTIRDL…GEATCTAELI (90 aa)). An intrachain disulfide couples Cys-1830 to Cys-1882.

It belongs to the protein kinase superfamily. CAMK Ser/Thr protein kinase family. All isoforms including Telokin bind calmodulin. Interacts with SVIL. Interacts with CTTN; this interaction is reduced during thrombin-induced endothelial cell (EC) contraction but is promoted by the barrier-protective agonist sphingosine 1-phosphate (S1P) within lamellipodia. A complex made of ABL1, CTTN and MYLK regulates cortical actin-based cytoskeletal rearrangement critical to sphingosine 1-phosphate (S1P)-mediated endothelial cell (EC) barrier enhancement. Binds to NAA10/ARD1 and PTK2B/PYK2. Mg(2+) is required as a cofactor. Requires Ca(2+) as cofactor. Post-translationally, can probably be down-regulated by phosphorylation. Tyrosine phosphorylation by ABL1 increases kinase activity, reverses MLCK-mediated inhibition of Arp2/3-mediated actin polymerization, and enhances CTTN-binding. Phosphorylation by SRC at Tyr-464 and Tyr-471 promotes CTTN binding. The C-terminus is deglutamylated by AGTPBP1/CCP1, AGBL1/CCP4 and AGBL4/CCP6, leading to the formation of Myosin light chain kinase, smooth muscle, deglutamylated form. The consequences of C-terminal deglutamylation are unknown. In terms of processing, acetylated at Lys-608 by NAA10/ARD1 via a calcium-dependent signaling; this acetylation represses kinase activity and reduces tumor cell migration. As to expression, smooth muscle and non-muscle isozymes are expressed in a wide variety of adult and fetal tissues and in cultured endothelium with qualitative expression appearing to be neither tissue- nor development-specific. Non-muscle isoform 2 is the dominant splice variant expressed in various tissues. Telokin has been found in a wide variety of adult and fetal tissues. Accumulates in well differentiated enterocytes of the intestinal epithelium in response to tumor necrosis factor (TNF).

It is found in the cytoplasm. It localises to the cell projection. The protein resides in the lamellipodium. The protein localises to the cleavage furrow. Its subcellular location is the cytoskeleton. It is found in the stress fiber. It carries out the reaction L-seryl-[myosin light chain] + ATP = O-phospho-L-seryl-[myosin light chain] + ADP + H(+). The enzyme catalyses L-threonyl-[myosin light chain] + ATP = O-phospho-L-threonyl-[myosin light chain] + ADP + H(+). Its activity is regulated as follows. Isoform 1 is activated by phosphorylation on Tyr-464 and Tyr-471. Isoforms which lack these tyrosine residues are not regulated in this way. All catalytically active isoforms require binding to calcium and calmodulin for activation. Repressed by organometallic pyridylnaphthalimide complexes, wortmannin, ML-7 (a synthetic naphthalenesulphonyl derivative that inhibits the binding of ATP to MLCK) and ML-9. Calcium/calmodulin-dependent myosin light chain kinase implicated in smooth muscle contraction via phosphorylation of myosin light chains (MLC). Also regulates actin-myosin interaction through a non-kinase activity. Phosphorylates PTK2B/PYK2 and myosin light-chains. Involved in the inflammatory response (e.g. apoptosis, vascular permeability, leukocyte diapedesis), cell motility and morphology, airway hyperreactivity and other activities relevant to asthma. Required for tonic airway smooth muscle contraction that is necessary for physiological and asthmatic airway resistance. Necessary for gastrointestinal motility. Implicated in the regulation of endothelial as well as vascular permeability, probably via the regulation of cytoskeletal rearrangements. In the nervous system it has been shown to control the growth initiation of astrocytic processes in culture and to participate in transmitter release at synapses formed between cultured sympathetic ganglion cells. Critical participant in signaling sequences that result in fibroblast apoptosis. Plays a role in the regulation of epithelial cell survival. Required for epithelial wound healing, especially during actomyosin ring contraction during purse-string wound closure. Mediates RhoA-dependent membrane blebbing. Triggers TRPC5 channel activity in a calcium-dependent signaling, by inducing its subcellular localization at the plasma membrane. Promotes cell migration (including tumor cells) and tumor metastasis. PTK2B/PYK2 activation by phosphorylation mediates ITGB2 activation and is thus essential to trigger neutrophil transmigration during acute lung injury (ALI). May regulate optic nerve head astrocyte migration. Probably involved in mitotic cytoskeletal regulation. Regulates tight junction probably by modulating ZO-1 exchange in the perijunctional actomyosin ring. Mediates burn-induced microvascular barrier injury; triggers endothelial contraction in the development of microvascular hyperpermeability by phosphorylating MLC. Essential for intestinal barrier dysfunction. Mediates Giardia spp.-mediated reduced epithelial barrier function during giardiasis intestinal infection via reorganization of cytoskeletal F-actin and tight junctional ZO-1. Necessary for hypotonicity-induced Ca(2+) entry and subsequent activation of volume-sensitive organic osmolyte/anion channels (VSOAC) in cervical cancer cells. Responsible for high proliferative ability of breast cancer cells through anti-apoptosis. The sequence is that of Myosin light chain kinase, smooth muscle from Homo sapiens (Human).